We begin with the raw amino-acid sequence, 230 residues long: Cytidylate kinase (230 aa).

Residue 12–20 coordinates ATP; sequence GPSGAGKGT.

This sequence belongs to the cytidylate kinase family. Type 1 subfamily.

The protein resides in the cytoplasm. It carries out the reaction CMP + ATP = CDP + ADP. The catalysed reaction is dCMP + ATP = dCDP + ADP. The protein is Cytidylate kinase of Shewanella loihica (strain ATCC BAA-1088 / PV-4).